The sequence spans 271 residues: Octanoyltransferase LipM (271 aa).

The region spanning 31-242 (GHNKPTLRFY…GLAEQFNVEF (212 aa)) is the BPL/LPL catalytic domain. The Acyl-thioester intermediate role is filled by cysteine 144.

This sequence belongs to the octanoyltransferase LipM family. Monomer.

The enzyme catalyses octanoyl-[ACP] + L-lysyl-[protein] = N(6)-octanoyl-L-lysyl-[protein] + holo-[ACP] + H(+). The protein operates within protein modification; protein lipoylation via endogenous pathway; protein N(6)-(lipoyl)lysine from octanoyl-[acyl-carrier-protein]. Catalyzes the transfer of endogenously produced octanoic acid from octanoyl-acyl-carrier-protein onto the lipoyl domain of GcvH, an intermediate carrier during protein lipoylation. In Clostridioides difficile (strain 630) (Peptoclostridium difficile), this protein is Octanoyltransferase LipM.